A 420-amino-acid chain; its full sequence is Glucose-1-phosphate adenylyltransferase (420 aa).

Residues tyrosine 107, glycine 172, 187–188, and serine 205 contribute to the alpha-D-glucose 1-phosphate site; that span reads EK.

Belongs to the bacterial/plant glucose-1-phosphate adenylyltransferase family. In terms of assembly, homotetramer.

The catalysed reaction is alpha-D-glucose 1-phosphate + ATP + H(+) = ADP-alpha-D-glucose + diphosphate. It participates in glycan biosynthesis; glycogen biosynthesis. Its function is as follows. Involved in the biosynthesis of ADP-glucose, a building block required for the elongation reactions to produce glycogen. Catalyzes the reaction between ATP and alpha-D-glucose 1-phosphate (G1P) to produce pyrophosphate and ADP-Glc. The sequence is that of Glucose-1-phosphate adenylyltransferase from Rhodopseudomonas palustris (strain HaA2).